The primary structure comprises 220 residues: Phosphatidylserine decarboxylase proenzyme (220 aa).

Residue Ser188 is the Schiff-base intermediate with substrate; via pyruvic acid of the active site. A Pyruvic acid (Ser); by autocatalysis modification is found at Ser188.

The protein belongs to the phosphatidylserine decarboxylase family. PSD-A subfamily. As to quaternary structure, heterodimer of a large membrane-associated beta subunit and a small pyruvoyl-containing alpha subunit. It depends on pyruvate as a cofactor. Is synthesized initially as an inactive proenzyme. Formation of the active enzyme involves a self-maturation process in which the active site pyruvoyl group is generated from an internal serine residue via an autocatalytic post-translational modification. Two non-identical subunits are generated from the proenzyme in this reaction, and the pyruvate is formed at the N-terminus of the alpha chain, which is derived from the carboxyl end of the proenzyme. The post-translation cleavage follows an unusual pathway, termed non-hydrolytic serinolysis, in which the side chain hydroxyl group of the serine supplies its oxygen atom to form the C-terminus of the beta chain, while the remainder of the serine residue undergoes an oxidative deamination to produce ammonia and the pyruvoyl prosthetic group on the alpha chain.

It localises to the cell membrane. The enzyme catalyses a 1,2-diacyl-sn-glycero-3-phospho-L-serine + H(+) = a 1,2-diacyl-sn-glycero-3-phosphoethanolamine + CO2. It participates in phospholipid metabolism; phosphatidylethanolamine biosynthesis; phosphatidylethanolamine from CDP-diacylglycerol: step 2/2. Its function is as follows. Catalyzes the formation of phosphatidylethanolamine (PtdEtn) from phosphatidylserine (PtdSer). The sequence is that of Phosphatidylserine decarboxylase proenzyme from Parabacteroides distasonis (strain ATCC 8503 / DSM 20701 / CIP 104284 / JCM 5825 / NCTC 11152).